Reading from the N-terminus, the 140-residue chain is Nucleoside diphosphate kinase (140 aa).

Residues Lys-11, Phe-59, Arg-87, Thr-93, Arg-104, and Asn-114 each coordinate ATP. His-117 serves as the catalytic Pros-phosphohistidine intermediate.

The protein belongs to the NDK family. As to quaternary structure, homotetramer. Requires Mg(2+) as cofactor.

It localises to the cytoplasm. It catalyses the reaction a 2'-deoxyribonucleoside 5'-diphosphate + ATP = a 2'-deoxyribonucleoside 5'-triphosphate + ADP. The enzyme catalyses a ribonucleoside 5'-diphosphate + ATP = a ribonucleoside 5'-triphosphate + ADP. In terms of biological role, major role in the synthesis of nucleoside triphosphates other than ATP. The ATP gamma phosphate is transferred to the NDP beta phosphate via a ping-pong mechanism, using a phosphorylated active-site intermediate. This is Nucleoside diphosphate kinase from Sphingopyxis alaskensis (strain DSM 13593 / LMG 18877 / RB2256) (Sphingomonas alaskensis).